The primary structure comprises 285 residues: Enterobactin synthase component B (285 aa).

The tract at residues 2 to 213 is isochorismatase; it reads AIPKLQAYAL…EELLPAPIPA (212 aa). A Carrier domain is found at 209 to 284; that stretch reads APIPASKAAL…AWWKLLSREV (76 aa). 3 residues coordinate Mg(2+): aspartate 227, glycine 242, and aspartate 244. O-(pantetheine 4'-phosphoryl)serine is present on serine 245.

The protein in the N-terminal section; belongs to the isochorismatase family. In terms of assembly, proteins EntB, EntD, EntE, and EntF form a multienzyme complex called enterobactin synthase. Homodimer. Also forms a specific pairwise interaction with EntC; this interaction likely facilitates substrate channeling to connect the EntB and EntC active sites. Mg(2+) serves as cofactor. 4'-phosphopantetheine is transferred from CoA to a specific serine of apo-EntB by EntD. Holo-EntB so formed is then acylated with 2,3-dihydroxybenzoate in a reaction catalyzed by EntE.

It localises to the cytoplasm. It catalyses the reaction 3 2,3-dihydroxybenzoate + 3 L-serine + 6 ATP = enterobactin + 6 AMP + 6 diphosphate + 4 H(+). The catalysed reaction is isochorismate + H2O = (2S,3S)-2,3-dihydroxy-2,3-dihydrobenzoate + pyruvate. It functions in the pathway siderophore biosynthesis; enterobactin biosynthesis. Its function is as follows. Involved in the biosynthesis of the siderophore enterobactin (enterochelin), which is a macrocyclic trimeric lactone of N-(2,3-dihydroxybenzoyl)-serine. The serine trilactone serves as a scaffolding for the three catechol functionalities that provide hexadentate coordination for the tightly ligated iron(3+) atoms. EntB is a bifunctional protein that serves as an isochorismate lyase and an aryl carrier protein (ArCP). Catalyzes the conversion of isochorismate to 2,3-dihydro-2,3-dihydroxybenzoate (2,3-diDHB), the precursor of 2,3-dihydroxybenzoate (DHB). In the enterobactin assembly, EntB functions as an aryl carrier protein phosphopantetheinylated near the C terminus by EntD to yield holo-EntB, which is then acylated by EntE with 2,3-dihydroxybenzoyl-AMP to form DHB-holo-EntB. Then this product will serve in the formation of the amide bond between 2,3-dihydroxybenzoate (DHB) and L-serine. This Escherichia coli O157:H7 protein is Enterobactin synthase component B.